The chain runs to 354 residues: Uroporphyrinogen decarboxylase (354 aa).

Residues 27–31 (RQAGR), Asp-77, Tyr-154, Thr-209, and His-327 contribute to the substrate site.

It belongs to the uroporphyrinogen decarboxylase family. In terms of assembly, homodimer.

The protein resides in the cytoplasm. The catalysed reaction is uroporphyrinogen III + 4 H(+) = coproporphyrinogen III + 4 CO2. It participates in porphyrin-containing compound metabolism; protoporphyrin-IX biosynthesis; coproporphyrinogen-III from 5-aminolevulinate: step 4/4. In terms of biological role, catalyzes the decarboxylation of four acetate groups of uroporphyrinogen-III to yield coproporphyrinogen-III. This chain is Uroporphyrinogen decarboxylase, found in Escherichia coli O17:K52:H18 (strain UMN026 / ExPEC).